Here is a 284-residue protein sequence, read N- to C-terminus: Asialoglycoprotein receptor 1 (284 aa).

Over 1-39 (MTKDYQDFQHLDNENDHHQLQRGPPPAPRLLQRLCSGFR) the chain is Cytoplasmic. The Endocytosis signal motif lies at 5–8 (YQDF). Cys-35 is lipidated: S-palmitoyl cysteine. Residues 40–60 (LFLLSLGLSILLLVVVCVITS) form a helical; Signal-anchor for type II membrane protein membrane-spanning segment. Residues 58-122 (ITSQNSQLRE…EDLREDHSRL (65 aa)) adopt a coiled-coil conformation. Residues 61-284 (QNSQLREDLR…VCETELGKAN (224 aa)) lie on the Extracellular side of the membrane. N-linked (GlcNAc...) asparagine glycans are attached at residues Asn-75, Asn-78, and Asn-146. 3 disulfide bridges follow: Cys-153-Cys-164, Cys-181-Cys-276, and Cys-254-Cys-268. Residues 160–277 (YEGSCYWFSS…CRRPYRWVCE (118 aa)) enclose the C-type lectin domain. Ca(2+) contacts are provided by Val-190, Glu-196, Asp-215, Gln-239, Asp-241, Asp-242, Glu-252, Asp-253, Asn-264, Asp-265, and Glu-277.

In terms of assembly, interacts with LASS2. Phosphorylated on a cytoplasmic Ser residue. Expressed exclusively in hepatic parenchymal cells.

It is found in the membrane. In terms of biological role, mediates the endocytosis of plasma glycoproteins to which the terminal sialic acid residue on their complex carbohydrate moieties has been removed. The receptor recognizes terminal galactose and N-acetylgalactosamine units. After ligand binding to the receptor, the resulting complex is internalized and transported to a sorting organelle, where receptor and ligand are disassociated. The receptor then returns to the cell membrane surface. This Rattus norvegicus (Rat) protein is Asialoglycoprotein receptor 1 (Asgr1).